Reading from the N-terminus, the 218-residue chain is Glutathione S-transferase-like protein OpS6 (218 aa).

Positions 5–86 (QPIKLYAHKK…YLIEQYDKDG (82 aa)) constitute a GST N-terminal domain. One can recognise a GST C-terminal domain in the interval 92–218 (SLQDKSLARA…KIAATKAALA (127 aa)).

This sequence belongs to the GST superfamily.

It functions in the pathway secondary metabolite biosynthesis. Functionally, glutathione S-transferase-like protein; part of the gene cluster that mediates the biosynthesis of the bibenzoquinone oosporein, a metabolite required for fungal virulence that acts by evading host immunity to facilitate fungal multiplication in insects. The non-reducing polyketide synthase OpS1 produces orsellinic acid by condensing acetyl-CoA with 3 malonyl-CoA units. Orsellinic acid is then hydroxylated to benzenetriol by the hydroxylase OpS4. The intermediate is oxidized either nonenzymatically to 5,5'-dideoxy-oosporein or enzymatically to benzenetetrol by the oxidoreductase OpS7. The latter is further dimerized to oosporein by the catalase OpS5. OpS6 probably functions en route for protecting cells against oxidative stress by scavenging any leaked free radical form of benzenetetrol by activating the thiol group of glutathione. This chain is Glutathione S-transferase-like protein OpS6, found in Beauveria bassiana (strain ARSEF 2860) (White muscardine disease fungus).